A 28-amino-acid chain; its full sequence is Omega-agatoxin-Aa2a (28 aa).

This sequence belongs to the neurotoxin 04 (omega-agtx) family. 03 (type II/III omega-agtx) subfamily. As to expression, expressed by the venom gland.

The protein resides in the secreted. Omega-agatoxin are antagonist of voltage-gated calcium channels. They block insect neuromuscular transmission presynaptically. Potent blocker of N-type calcium channels (Cav2.2/CACNA1B). In Agelenopsis aperta (North American funnel-web spider), this protein is Omega-agatoxin-Aa2a.